Here is a 492-residue protein sequence, read N- to C-terminus: 2,3-bisphosphoglycerate-independent phosphoglycerate mutase (492 aa).

Asp-11 and Ser-61 together coordinate Mn(2+). Ser-61 serves as the catalytic Phosphoserine intermediate. Substrate-binding positions include His-118, 147–148 (RD), Arg-178, Arg-184, 248–251 (RNDR), and Lys-320. Mn(2+) contacts are provided by Asp-386, His-390, Asp-427, His-428, and His-445.

This sequence belongs to the BPG-independent phosphoglycerate mutase family. Monomer. The cofactor is Mn(2+).

The catalysed reaction is (2R)-2-phosphoglycerate = (2R)-3-phosphoglycerate. Its pathway is carbohydrate degradation; glycolysis; pyruvate from D-glyceraldehyde 3-phosphate: step 3/5. In terms of biological role, catalyzes the interconversion of 2-phosphoglycerate and 3-phosphoglycerate. The sequence is that of 2,3-bisphosphoglycerate-independent phosphoglycerate mutase from Campylobacter jejuni subsp. jejuni serotype O:23/36 (strain 81-176).